The following is a 218-amino-acid chain: Small ribosomal subunit protein uS3 (218 aa).

The KH type-2 domain occupies 38–106 (IREFISKRLS…RVHINILEIK (69 aa)).

It belongs to the universal ribosomal protein uS3 family. Part of the 30S ribosomal subunit. Forms a tight complex with proteins S10 and S14.

Binds the lower part of the 30S subunit head. Binds mRNA in the 70S ribosome, positioning it for translation. In Bacillus velezensis (strain DSM 23117 / BGSC 10A6 / LMG 26770 / FZB42) (Bacillus amyloliquefaciens subsp. plantarum), this protein is Small ribosomal subunit protein uS3.